The following is a 287-amino-acid chain: Protein UL24 homolog (287 aa).

Disordered stretches follow at residues 1–33 and 254–287; these read MARR…FSRR and RVGK…DSNL. Residues 16-33 show a composition bias toward basic residues; sequence HRSRTRSKTAHHRKFSRR.

The protein belongs to the herpesviridae UL24 family.

The protein localises to the virion. It localises to the host cytoplasm. Its subcellular location is the host nucleus. The protein resides in the host nucleolus. It is found in the host Golgi apparatus. May participate in nuclear egress of viral particles. Plays a role in the dispersal of several host nucleolar proteins including NCL/nucleolin and NPM1. Since deletion of host NCL/nucleolin negatively impact on nuclear egress, UL24 supposedly acts on this process through its effect on host nucleoli. The chain is Protein UL24 homolog from Infectious laryngotracheitis virus (strain Thorne V882) (ILTV).